The following is a 487-amino-acid chain: Cytochrome c-552 (487 aa).

An N-terminal signal peptide occupies residues 1–27 (MSKKWTRNTAAMAAILSALCLSTNALA). Residue H104 participates in heme c binding. 3 residues coordinate heme: C132, C135, and K136. Positions 170, 173, 174, 219, 222, and 223 each coordinate heme c. Positions 225, 226, 271, and 273 each coordinate Ca(2+). Y226 contributes to the substrate binding site. H274 contributes to the substrate binding site. Residues H285, C292, C295, H296, H311, C324, C327, H328, and H403 each coordinate heme c.

It belongs to the cytochrome c-552 family. Ca(2+) is required as a cofactor. Heme c serves as cofactor.

It localises to the periplasm. It catalyses the reaction 6 Fe(III)-[cytochrome c] + NH4(+) + 2 H2O = 6 Fe(II)-[cytochrome c] + nitrite + 8 H(+). The protein operates within nitrogen metabolism; nitrate reduction (assimilation). Functionally, catalyzes the reduction of nitrite to ammonia, consuming six electrons in the process. The chain is Cytochrome c-552 from Photobacterium profundum (strain SS9).